The sequence spans 407 residues: Phosphopentomutase (407 aa).

Residues Asp10, Asp306, His311, Asp347, His348, and His359 each contribute to the Mn(2+) site.

This sequence belongs to the phosphopentomutase family. Mn(2+) serves as cofactor.

The protein resides in the cytoplasm. It carries out the reaction 2-deoxy-alpha-D-ribose 1-phosphate = 2-deoxy-D-ribose 5-phosphate. It catalyses the reaction alpha-D-ribose 1-phosphate = D-ribose 5-phosphate. Its pathway is carbohydrate degradation; 2-deoxy-D-ribose 1-phosphate degradation; D-glyceraldehyde 3-phosphate and acetaldehyde from 2-deoxy-alpha-D-ribose 1-phosphate: step 1/2. Its function is as follows. Isomerase that catalyzes the conversion of deoxy-ribose 1-phosphate (dRib-1-P) and ribose 1-phosphate (Rib-1-P) to deoxy-ribose 5-phosphate (dRib-5-P) and ribose 5-phosphate (Rib-5-P), respectively. The chain is Phosphopentomutase from Shigella boydii serotype 18 (strain CDC 3083-94 / BS512).